A 524-amino-acid chain; its full sequence is Serine/threonine-protein kinase PAK 2 (524 aa).

The disordered stretch occupies residues 1-81 (MSDNGELEDK…PEISPPSDFE (81 aa)). The residue at position 2 (serine 2) is an N-acetylserine. Phosphoserine occurs at positions 2, 20, 55, and 58. Threonine 60 carries the phosphothreonine modification. At lysine 62 the chain carries N6-acetyllysine. Residue serine 64 is modified to Phosphoserine. Positions 67–81 (KEKERPEISPPSDFE) are enriched in basic and acidic residues. The interval 69–112 (KERPEISPPSDFEHTIHVGFDAVTGEFTGMPEQWARLLQTSNIT) is GTPase-binding. The autoregulatory region stretch occupies residues 69-137 (KERPEISPPS…KFYDSNTVKQ (69 aa)). Residues 74–87 (ISPPSDFEHTIHVG) form the CRIB domain. Lysine 128 bears the N6-acetyllysine mark. Threonine 134 bears the Phosphothreonine mark. Tyrosine 139 carries the phosphotyrosine modification. Serine 141 is subject to Phosphoserine. Threonine 143 carries the phosphothreonine modification. Disordered stretches follow at residues 143-164 (TPPE…GTEA) and 169-188 (TEEE…PRPD). Serine 152 is subject to Phosphoserine. Phosphothreonine occurs at positions 154 and 169. Positions 169 to 178 (TEEEDDDEET) are enriched in acidic residues. Serine 197 carries the post-translational modification Phosphoserine. Glycine 213 carries the N-myristoyl glycine; in form PAK-2p34 lipid modification. The Nuclear localization signal motif lies at 245–251 (PKKKYTR). The Protein kinase domain occupies 249–499 (YTRYEKIGQG…SAKELLQHPF (251 aa)). Residues 255-263 (IGQGASGTV) and lysine 278 contribute to the ATP site. Residue arginine 367 is the Proton acceptor of the active site. Threonine 402 carries the phosphothreonine; by autocatalysis modification.

Belongs to the protein kinase superfamily. STE Ser/Thr protein kinase family. STE20 subfamily. As to quaternary structure, interacts tightly with GTP-bound but not GDP-bound CDC42/p21 and RAC1. Interacts with SH3MD4. Interacts with SCRIB. Interacts with ARHGEF7 and GIT1. PAK-2p34 interacts with ARHGAP10. (Microbial infection) Interacts with and activated by HIV-1 Nef. Post-translationally, full-length PAK2 is autophosphorylated when activated by CDC42/p21. Following cleavage, both peptides, PAK-2p27 and PAK-2p34, become highly autophosphorylated, with PAK-2p27 being phosphorylated on serine and PAK-2p34 on threonine residues, respectively. Autophosphorylation of PAK-2p27 can occur in the absence of any effectors and is dependent on phosphorylation of Thr-402, because PAK-2p27 is acting as an exogenous substrate. In terms of processing, during apoptosis proteolytically cleaved by caspase-3 or caspase-3-like proteases to yield active PAK-2p34. Ubiquitinated, leading to its proteasomal degradation. Post-translationally, PAK-2p34 is myristoylated. Ubiquitously expressed. Higher levels seen in skeletal muscle, ovary, thymus and spleen.

The protein localises to the cytoplasm. The protein resides in the nucleus. It localises to the perinuclear region. Its subcellular location is the membrane. It carries out the reaction L-seryl-[protein] + ATP = O-phospho-L-seryl-[protein] + ADP + H(+). The catalysed reaction is L-threonyl-[protein] + ATP = O-phospho-L-threonyl-[protein] + ADP + H(+). With respect to regulation, activated by binding small G proteins. Binding of GTP-bound CDC42 or RAC1 to the autoregulatory region releases monomers from the autoinhibited dimer, enables phosphorylation of Thr-402 and allows the kinase domain to adopt an active structure. Following caspase cleavage, autophosphorylated PAK-2p34 is constitutively active. Functionally, serine/threonine protein kinase that plays a role in a variety of different signaling pathways including cytoskeleton regulation, cell motility, cell cycle progression, apoptosis or proliferation. Acts as a downstream effector of the small GTPases CDC42 and RAC1. Activation by the binding of active CDC42 and RAC1 results in a conformational change and a subsequent autophosphorylation on several serine and/or threonine residues. Full-length PAK2 stimulates cell survival and cell growth. Phosphorylates MAPK4 and MAPK6 and activates the downstream target MAPKAPK5, a regulator of F-actin polymerization and cell migration. Phosphorylates JUN and plays an important role in EGF-induced cell proliferation. Phosphorylates many other substrates including histone H4 to promote assembly of H3.3 and H4 into nucleosomes, BAD, ribosomal protein S6, or MBP. Phosphorylates CASP7, thereby preventing its activity. Additionally, associates with ARHGEF7 and GIT1 to perform kinase-independent functions such as spindle orientation control during mitosis. On the other hand, apoptotic stimuli such as DNA damage lead to caspase-mediated cleavage of PAK2, generating PAK-2p34, an active p34 fragment that translocates to the nucleus and promotes cellular apoptosis involving the JNK signaling pathway. Caspase-activated PAK2 phosphorylates MKNK1 and reduces cellular translation. The sequence is that of Serine/threonine-protein kinase PAK 2 (PAK2) from Homo sapiens (Human).